The sequence spans 422 residues: MSTGKESSKAYADIESRGDYKDDGKKGSTLSSKQHFMLSLTFILIGLSSLNVWNTALGLNINFKYNTFQITGLVCSSIVALFVEIPKIMLPFLLGGLSILCAGFQISHSFFTDTQFDTYCLVAFIVIGVVAGLAQTIAFNIGSTMEDNMGGYMSAGIGISGVFIFVINLLLDQFVSPEKHYGVNKAKLLYLYIICELCLILAIVFCVCNLDLTNKNNKKDEENKENNATLSYMELFKDSYKAILTMFLVNWLTLQLFPGVGHKKWQESHNISDYNVTIIVGMFQVFDFLSRYPPNLTHIKIFKNFTFSLNKLLVANSLRLLFIPWFILNACVDHPFFKNIVQQCVCMAMLAFTNGWFNTVPFLVFVKELKKAKKKKEIEIISTFLVIAMFVGLFCGIWTTYIYNLFNIVLPKPDLPPIDVTQ.

Residues 1–38 are Cytoplasmic-facing; it reads MSTGKESSKAYADIESRGDYKDDGKKGSTLSSKQHFML. Residues 39-59 form a helical membrane-spanning segment; sequence SLTFILIGLSSLNVWNTALGL. Residue tryptophan 53 coordinates inosine. Residues 60-63 are Extracellular-facing; the sequence is NINF. The helical transmembrane segment at 64-82 threads the bilayer; sequence KYNTFQITGLVCSSIVALF. Topologically, residues 83-87 are cytoplasmic; it reads VEIPK. The chain crosses the membrane as a helical span at residues 88–107; the sequence is IMLPFLLGGLSILCAGFQIS. The Extracellular segment spans residues 108-116; that stretch reads HSFFTDTQF. The helical transmembrane segment at 117 to 139 threads the bilayer; it reads DTYCLVAFIVIGVVAGLAQTIAF. Inosine is bound at residue glutamine 135. The Cytoplasmic segment spans residues 140 to 149; sequence NIGSTMEDNM. A helical membrane pass occupies residues 150–174; it reads GGYMSAGIGISGVFIFVINLLLDQF. At 175 to 185 the chain is on the extracellular side; it reads VSPEKHYGVNK. Residues 186–208 traverse the membrane as a helical segment; it reads AKLLYLYIICELCLILAIVFCVC. The Cytoplasmic portion of the chain corresponds to 209–241; sequence NLDLTNKNNKKDEENKENNATLSYMELFKDSYK. A helical membrane pass occupies residues 242–265; that stretch reads AILTMFLVNWLTLQLFPGVGHKKW. At 266-274 the chain is on the extracellular side; that stretch reads QESHNISDY. A helical transmembrane segment spans residues 275-294; sequence NVTIIVGMFQVFDFLSRYPP. Aspartate 287 and arginine 291 together coordinate inosine. Topologically, residues 295–309 are cytoplasmic; that stretch reads NLTHIKIFKNFTFSL. The chain crosses the membrane as a helical span at residues 310–330; the sequence is NKLLVANSLRLLFIPWFILNA. The Extracellular segment spans residues 331-338; it reads CVDHPFFK. Residues 339–362 form a helical membrane-spanning segment; it reads NIVQQCVCMAMLAFTNGWFNTVPF. Topologically, residues 363 to 374 are cytoplasmic; it reads LVFVKELKKAKK. A helical membrane pass occupies residues 375–397; that stretch reads KKEIEIISTFLVIAMFVGLFCGI. Over 398–422 the chain is Extracellular; that stretch reads WTTYIYNLFNIVLPKPDLPPIDVTQ.

It belongs to the SLC29A/ENT transporter (TC 2.A.57) family.

It localises to the cell membrane. The catalysed reaction is inosine(in) = inosine(out). It carries out the reaction adenosine(in) = adenosine(out). It catalyses the reaction hypoxanthine(out) = hypoxanthine(in). The enzyme catalyses guanosine(in) = guanosine(out). The catalysed reaction is guanine(out) = guanine(in). It carries out the reaction thymidine(in) = thymidine(out). It catalyses the reaction uridine(out) = uridine(in). The enzyme catalyses uracil(in) = uracil(out). The catalysed reaction is thymine(out) = thymine(in). It carries out the reaction adenine(out) = adenine(in). It catalyses the reaction cytosine(out) = cytosine(in). The enzyme catalyses xanthine(out) = xanthine(in). Its activity is regulated as follows. GSK4 (5-methyl-N-[2-(2-oxo-1-azepanyl)ethyl]-2-phenyl-1,3-oxazole-4-carbox-amide) disrupts the transport activity at 500 nM. Inhibited partially by 10 uM dipyridamole. Inhibited partially by N,N'-1,3-benzothiazole-2,6-diyldi(2-furamide), 2-bromo-N-(4-[1,3]oxazolo[4,5-b]pyridin-2-ylphenyl)benzamide, 4-methyl-7-[(3,4,5-trimethoxybenzyl)oxy]-2H-chromen-2-one, 2-(1-methyl-1H-indol-3-yl)-2-oxo-N-[4-(pyrrolidin-1-ylcarbonyl)phenyl]acet amide and 2-[2-(2-methylphenyl)vinyl]-4(3H)-quinazolinone. Sodium-independent nucleoside and nucleobase transporter with a broad substrate specificity. Plays a key role in the utilization of host purine sources by P.falciparum during intraerythrocytic development enabling parasite growth in the presence of physiological concentrations of adenosine, inosine, guanine, guanosine, xanthine and hypoxanthine. Essential for parasite transition from ring to trophozoite or from trophozoite to schizont stage but not for erythrocyte invasion by merozoites. In Plasmodium falciparum (isolate 3D7), this protein is Nucleoside transporter 1.